Consider the following 174-residue polypeptide: RNA pyrophosphohydrolase (174 aa).

A Nudix hydrolase domain is found at Gly-6–Lys-149. Positions Gly-38–Gly-59 match the Nudix box motif.

It belongs to the Nudix hydrolase family. RppH subfamily. It depends on a divalent metal cation as a cofactor.

In terms of biological role, accelerates the degradation of transcripts by removing pyrophosphate from the 5'-end of triphosphorylated RNA, leading to a more labile monophosphorylated state that can stimulate subsequent ribonuclease cleavage. This chain is RNA pyrophosphohydrolase, found in Photobacterium profundum (strain SS9).